A 473-amino-acid chain; its full sequence is Cannabinoid receptor 1 (473 aa).

Residues 1 to 117 (MKSILDGLAD…CFMILNPSQQ (117 aa)) lie on the Extracellular side of the membrane. The segment at 2 to 23 (KSILDGLADTTFRTITTDLLYV) is required for mitochondrial localization. N-linked (GlcNAc...) asparagine glycosylation is found at asparagine 78 and asparagine 84. A helical transmembrane segment spans residues 118–143 (LAIAVLSLTLGTFTVLENLLVLCVIL). Topologically, residues 144–155 (HSRSLRCRPSYH) are cytoplasmic. The chain crosses the membrane as a helical span at residues 156–176 (FIGSLAVADLLGSVIFVYSFV). Residues 177 to 188 (DFHVFHRKDSPN) are Extracellular-facing. A helical transmembrane segment spans residues 189–213 (VFLFKLGGVTASFTASVGSLFLTAI). Topologically, residues 214–233 (DRYISIHRPLAYKRIVTRPK) are cytoplasmic. The helical transmembrane segment at 234-256 (AVVAFCLMWTIAIVIAVLPLLGW) threads the bilayer. Topologically, residues 257 to 274 (NCKKLQSVCSDIFPLIDE) are extracellular. Residues 275–300 (TYLMFWIGVTSVLLLFIVYAYMYILW) form a helical membrane-spanning segment. Topologically, residues 301–345 (KAHSHAVRMIQRGTQKSIIIHTSEDGKVQVTRPDQARMDIRLAKT) are cytoplasmic. The helical transmembrane segment at 346–366 (LVLILVVLIICWGPLLAIMVY) threads the bilayer. The Extracellular segment spans residues 367 to 378 (DVFGKMNKLIKT). A helical membrane pass occupies residues 379 to 400 (VFAFCSMLCLLNSTVNPIIYAL). Residues 401 to 473 (RSKDLRHAFR…VSTDTSAEAL (73 aa)) lie on the Cytoplasmic side of the membrane. A lipid anchor (S-palmitoyl cysteine) is attached at cysteine 416. Residues serine 426 and serine 430 each carry the phosphoserine modification.

Belongs to the G-protein coupled receptor 1 family. In terms of assembly, interacts (via C-terminus) with CNRIP1. Associates with G protein alpha subunits, including G(i) alpha-1/GNAI1, G(i) alpha-3/GNAI3 and G(o)-alpha/GNAO1; palmitoylation is important for interaction with GNAI3 and GNAO1. In terms of processing, palmitoylation at Cys-416 is important for recruitment at both plasma membrane and lipid rafts and association with G protein alpha subunits. Expressed in the brain, in the striatum, medial septum, descending arm of the band of Broca, the amygdaloid nucleus, the hippocampus and cortex (at protein level). High levels in the lateral striatum. In rostral brain regions, high expression levels in the dorsal lateral striatum, while in the caudal brain regions, high levels are observed in the ventral lateral striatum. Expressed in monocytes/macrophages (at protein level). Expressed in striated muscles and in vascular smooth muscles cells (at protein level).

It is found in the cell membrane. The protein localises to the mitochondrion outer membrane. The protein resides in the cell projection. Its subcellular location is the axon. It localises to the presynapse. Its activity is regulated as follows. Hemopressin, a peptide derived from hemoglobin subunit alpha (HBA1 and/or HBA2), acts as an antagonist peptide: hemopressin-binding efficiently blocks cannabinoid receptor CNR1 and subsequent signaling. Functionally, G-protein coupled receptor for cannabinoids, including endocannabinoids (eCBs), such as N-arachidonoylethanolamide (also called anandamide or AEA) and 2-arachidonoylglycerol (2-AG). Mediates many cannabinoid-induced effects, acting, among others, on food intake, memory loss, gastrointestinal motility, catalepsy, ambulatory activity, anxiety, chronic pain. Signaling typically involves reduction in cyclic AMP. In the hypothalamus, may have a dual effect on mitochondrial respiration depending upon the agonist dose and possibly upon the cell type. Increases respiration at low doses, while decreases respiration at high doses. At high doses, CNR1 signal transduction involves G-protein alpha-i protein activation and subsequent inhibition of mitochondrial soluble adenylate cyclase, decrease in cyclic AMP concentration, inhibition of protein kinase A (PKA)-dependent phosphorylation of specific subunits of the mitochondrial electron transport system, including NDUFS2. In the hypothalamus, inhibits leptin-induced reactive oxygen species (ROS) formation and mediates cannabinoid-induced increase in SREBF1 and FASN gene expression. In response to cannabinoids, drives the release of orexigenic beta-endorphin, but not that of melanocyte-stimulating hormone alpha/alpha-MSH, from hypothalamic POMC neurons, hence promoting food intake. In the hippocampus, regulates cellular respiration and energy production in response to cannabinoids. Involved in cannabinoid-dependent depolarization-induced suppression of inhibition (DSI), a process in which depolarization of CA1 postsynaptic pyramidal neurons mobilizes eCBs, which retrogradely activate presynaptic CB1 receptors, transiently decreasing GABAergic inhibitory neurotransmission. Also reduces excitatory synaptic transmission. In superior cervical ganglions and cerebral vascular smooth muscle cells, inhibits voltage-gated Ca(2+) channels in a constitutive, as well as agonist-dependent manner. Induces leptin production in adipocytes and reduces LRP2-mediated leptin clearance in the kidney, hence participating in hyperleptinemia. In adipose tissue, CNR1 signaling leads to increased expression of SREBF1, ACACA and FASN genes. In the liver, activation by endocannabinoids leads to increased de novo lipogenesis and reduced fatty acid catabolism, associated with increased expression of SREBF1/SREBP-1, GCK, ACACA, ACACB and FASN genes. May also affect de novo cholesterol synthesis and HDL-cholesteryl ether uptake. Peripherally modulates energy metabolism. In high carbohydrate diet-induced obesity, may decrease the expression of mitochondrial dihydrolipoyl dehydrogenase/DLD in striated muscles, as well as that of selected glucose/ pyruvate metabolic enzymes, hence affecting energy expenditure through mitochondrial metabolism. In response to cannabinoid anandamide, elicits a pro-inflammatory response in macrophages, which involves NLRP3 inflammasome activation and IL1B and IL18 secretion. In macrophages infiltrating pancreatic islets, this process may participate in the progression of type-2 diabetes and associated loss of pancreatic beta-cells. This Rattus norvegicus (Rat) protein is Cannabinoid receptor 1 (Cnr1).